Consider the following 264-residue polypeptide: ECF RNA polymerase sigma factor BldN (264 aa).

Positions 1–87 are not required for transcription in vitro; it reads MYPHVGVDAS…PAADSDSARM (87 aa). Residues 64–83 are disordered; sequence RSSSSGAAATTHRRPAADSD. The interval 105-172 is sigma-70 factor domain-2; the sequence is LYDQYSDTVY…LVADHFKSSR (68 aa). Positions 129–132 match the Polymerase core binding motif; the sequence is DLTS. The sigma-70 factor domain-4 stretch occupies residues 204–255; it reads ALLDAVRRLNPQQQECVTLRFLQGLSVAETARVMGKNEGAIKTLQYRAVRTL.

It belongs to the sigma-70 factor family. ECF subfamily. Two forms of protein exist; a 35 kDa form in early growth and a 28 kDa form seen in later stages (at protein level). In liquid culture the larger form accumulates to higher level than on solid media. The shorter form results from processing just upstream of Met-87; the exact position is unknown. There are 4 possible start codons; mutation of the first prevents protein production while mutation of the other 3 (Val-44, Met-87 and Met-88) permits production of both forms. Introduction of stop codons between the first and second, or second and third possible start codons also prevents protein production, corroborating that the annotated start codon is the correct one.

In terms of biological role, sigma factors are initiation factors that promote the attachment of RNA polymerase to specific initiation sites and are then released. Extracytoplasmic function (ECF) sigma factors are usually held in an inactive form by an anti-sigma factor until released. ECF sigma factor involved in aerial mycelium formation, required for translation from the bldMp1 promoter. Expressed as a preprotein; processing and accumulation of the mature protein starts as aerial mycelium formation and sporulation commence. Activates expression of about 17 genes, including those for rdlA and most of the chaplins (chpA to chpH); chaplin activation is indirect. The sequence is that of ECF RNA polymerase sigma factor BldN from Streptomyces coelicolor (strain ATCC BAA-471 / A3(2) / M145).